We begin with the raw amino-acid sequence, 91 residues long: UPF0367 protein cce_2199 (91 aa).

The protein belongs to the UPF0367 family.

This Crocosphaera subtropica (strain ATCC 51142 / BH68) (Cyanothece sp. (strain ATCC 51142)) protein is UPF0367 protein cce_2199.